A 636-amino-acid polypeptide reads, in one-letter code: Zinc finger protein 90 (636 aa).

One can recognise a KRAB domain in the interval 14-85 (VTFKDVAVNF…EKEIQRPFCP (72 aa)). 7 consecutive C2H2-type zinc fingers follow at residues 208–230 (YKCD…EKIH), 250–272 (HECA…QRIH), 278–300 (FECN…ENAH), 306–328 (YQCS…QRIH), 334–356 (YRCN…EVTH), 362–384 (FQCK…ERTH), and 390–412 (FECS…MRIH). The disordered stretch occupies residues 227-247 (EKIHKGDPYSNGTDQGAQSGR). Residue lysine 444 forms a Glycyl lysine isopeptide (Lys-Gly) (interchain with G-Cter in SUMO2) linkage. 6 C2H2-type zinc fingers span residues 446-468 (YHCN…QRLH), 494-516 (YQCN…HRIH), 522-544 (YECN…ERTH), 550-572 (YECI…ERTH), 578-600 (YECN…QRTH), and 606-628 (YACK…HRVH).

Belongs to the krueppel C2H2-type zinc-finger protein family. As to quaternary structure, interacts (via N- and C-termini) with REST (via zinc-finger DNA-binding domain); the interaction inhibits REST repressor activity. As to expression, brain, spleen, thymus, and testis. Expressed in heart.

It localises to the nucleus. Inhibits the transcriptional repressor activity of REST by inhibiting its binding to DNA, thereby derepressing transcription of REST target genes. This chain is Zinc finger protein 90 (Zfp90), found in Mus musculus (Mouse).